Consider the following 162-residue polypeptide: Peptide deformylase-like (162 aa).

Belongs to the polypeptide deformylase family.

The sequence is that of Peptide deformylase-like from Staphylococcus epidermidis (strain ATCC 35984 / DSM 28319 / BCRC 17069 / CCUG 31568 / BM 3577 / RP62A).